Here is a 418-residue protein sequence, read N- to C-terminus: Serine hydroxymethyltransferase (418 aa).

(6S)-5,6,7,8-tetrahydrofolate contacts are provided by residues L121 and 125 to 127 (GHL). K230 carries the N6-(pyridoxal phosphate)lysine modification. 355-357 (SPF) serves as a coordination point for (6S)-5,6,7,8-tetrahydrofolate.

This sequence belongs to the SHMT family. Homodimer. Requires pyridoxal 5'-phosphate as cofactor.

It localises to the cytoplasm. The enzyme catalyses (6R)-5,10-methylene-5,6,7,8-tetrahydrofolate + glycine + H2O = (6S)-5,6,7,8-tetrahydrofolate + L-serine. Its pathway is one-carbon metabolism; tetrahydrofolate interconversion. The protein operates within amino-acid biosynthesis; glycine biosynthesis; glycine from L-serine: step 1/1. In terms of biological role, catalyzes the reversible interconversion of serine and glycine with tetrahydrofolate (THF) serving as the one-carbon carrier. This reaction serves as the major source of one-carbon groups required for the biosynthesis of purines, thymidylate, methionine, and other important biomolecules. Also exhibits THF-independent aldolase activity toward beta-hydroxyamino acids, producing glycine and aldehydes, via a retro-aldol mechanism. This chain is Serine hydroxymethyltransferase, found in Streptococcus pyogenes serotype M1.